The chain runs to 1455 residues: Cleavage and polyadenylation specificity factor subunit 1 (1455 aa).

It belongs to the CPSF1 family. In terms of assembly, component of the cleavage and polyadenylation specificity factor (CPSF) complex, composed of at least Clp, Cpsf73, Cpsf100 and Cpsf160.

Its subcellular location is the nucleus. Its function is as follows. Component of the cleavage and polyadenylation specificity factor (CPSF) complex that plays a key role in pre-mRNA 3'-end formation, recognizing the AAUAAA signal sequence and interacting with poly(A) polymerase and other factors to bring about cleavage and poly(A) addition. This subunit is involved in the RNA recognition step of the polyadenylation reaction. The sequence is that of Cleavage and polyadenylation specificity factor subunit 1 (Cpsf160) from Drosophila melanogaster (Fruit fly).